The chain runs to 214 residues: Probable septum site-determining protein MinC (214 aa).

Belongs to the MinC family. In terms of assembly, interacts with MinD and FtsZ.

In terms of biological role, cell division inhibitor that blocks the formation of polar Z ring septums. Rapidly oscillates between the poles of the cell to destabilize FtsZ filaments that have formed before they mature into polar Z rings. Prevents FtsZ polymerization. The chain is Probable septum site-determining protein MinC from Caldanaerobacter subterraneus subsp. tengcongensis (strain DSM 15242 / JCM 11007 / NBRC 100824 / MB4) (Thermoanaerobacter tengcongensis).